The following is a 224-amino-acid chain: Menaquinol:cytochrome c reductase cytochrome b subunit (224 aa).

Residues 37–57 (FSAFVYCFGGLTFFVTVIQVL) traverse the membrane as a helical segment. Tyr42 contacts heme b. Cys43 serves as a coordination point for heme c. The heme b site is built by Arg91, His94, His108, and Arg111. 3 helical membrane-spanning segments follow: residues 96–116 (WGASLVIVMMFLHTLRVFFQG), 126–146 (WIVGVLIFFVMLGLGFTGYLL), and 195–215 (IHVFFLPAALFGLMAAHFIMI). Heme b-binding residues include His196 and His211. Heme c contacts are provided by Arg216 and Ile220. A heme b-binding site is contributed by Ser221.

This sequence belongs to the cytochrome b family. The main subunits of the menaquinol:cytochrome c complex are a Rieske-type iron-sulfur protein (QcrA), a cytochrome b (QcrB) and a cytochrome c (QcrC). Heme b serves as cofactor. The cofactor is heme c.

It localises to the cell membrane. Functionally, component of the menaquinol:cytochrome c reductase complex. The chain is Menaquinol:cytochrome c reductase cytochrome b subunit from Bacillus subtilis (strain 168).